Reading from the N-terminus, the 585-residue chain is Glutathione S-transferase C-terminal domain-containing protein homolog (585 aa).

Residues 120–275 enclose the GST C-terminal domain; the sequence is LGFKGSCLLA…DKCARVLRDL (156 aa).

This sequence belongs to the GSTCD family.

The protein is Glutathione S-transferase C-terminal domain-containing protein homolog of Drosophila melanogaster (Fruit fly).